A 375-amino-acid polypeptide reads, in one-letter code: Queuine tRNA-ribosyltransferase (375 aa).

Asp-90 (proton acceptor) is an active-site residue. Substrate contacts are provided by residues 90–94, Asp-144, Gln-190, and Gly-217; that span reads DSGGF. Residues 248–254 are RNA binding; sequence GIGTPHY. Asp-267 (nucleophile) is an active-site residue. An RNA binding; important for wobble base 34 recognition region spans residues 272–276; the sequence is TRIAR. Zn(2+) is bound by residues Cys-305, Cys-307, Cys-310, and His-336.

It belongs to the queuine tRNA-ribosyltransferase family. As to quaternary structure, homodimer. Within each dimer, one monomer is responsible for RNA recognition and catalysis, while the other monomer binds to the replacement base PreQ1. It depends on Zn(2+) as a cofactor.

The enzyme catalyses 7-aminomethyl-7-carbaguanine + guanosine(34) in tRNA = 7-aminomethyl-7-carbaguanosine(34) in tRNA + guanine. It participates in tRNA modification; tRNA-queuosine biosynthesis. Catalyzes the base-exchange of a guanine (G) residue with the queuine precursor 7-aminomethyl-7-deazaguanine (PreQ1) at position 34 (anticodon wobble position) in tRNAs with GU(N) anticodons (tRNA-Asp, -Asn, -His and -Tyr). Catalysis occurs through a double-displacement mechanism. The nucleophile active site attacks the C1' of nucleotide 34 to detach the guanine base from the RNA, forming a covalent enzyme-RNA intermediate. The proton acceptor active site deprotonates the incoming PreQ1, allowing a nucleophilic attack on the C1' of the ribose to form the product. After dissociation, two additional enzymatic reactions on the tRNA convert PreQ1 to queuine (Q), resulting in the hypermodified nucleoside queuosine (7-(((4,5-cis-dihydroxy-2-cyclopenten-1-yl)amino)methyl)-7-deazaguanosine). The protein is Queuine tRNA-ribosyltransferase of Borrelia recurrentis (strain A1).